The sequence spans 51 residues: U-Asilidin(1)-Eru1a (51 aa).

Positions 1-23 (MANYIDVLSFLAIICATVLATLA) are cleaved as a signal peptide. 3 disulfide bridges follow: C26–C40, C33–C44, and C39–C49.

It belongs to the asilidin-1 family. In terms of tissue distribution, expressed by the venom gland. The most highly expressed peptides U-Asilidin1-Mar1a is around 3000 times higher expressed in the venom thoracic glands compared to its body tissues.

Its subcellular location is the secreted. In terms of biological role, induces neurotoxic effect on honeybees, including slow movements, disorientation and paralysis. Since it provokes similar symptoms than omega-atracotoxin, it is probable that it acts in the same way by inhibiting voltage-gated calcium channels. In Eutolmus rufibarbis (Golden-tabbed robberfly), this protein is U-Asilidin(1)-Eru1a.